A 114-amino-acid polypeptide reads, in one-letter code: Nucleoid-associated protein Cyan7425_0899 (114 aa).

Belongs to the YbaB/EbfC family. As to quaternary structure, homodimer.

The protein localises to the cytoplasm. The protein resides in the nucleoid. Functionally, binds to DNA and alters its conformation. May be involved in regulation of gene expression, nucleoid organization and DNA protection. The sequence is that of Nucleoid-associated protein Cyan7425_0899 from Cyanothece sp. (strain PCC 7425 / ATCC 29141).